A 1929-amino-acid chain; its full sequence is Myoferlin (1929 aa).

The segment at 1–53 (MISYEPPPSAISNPTDPGGTTIIQGDGENDEEEDRDIVDAGFNPSVPGAPGQT) is disordered. Acidic residues predominate over residues 27–36 (GENDEEEDRD). 2 C2 domains span residues 62–179 (VKGK…RKWV) and 218–354 (EDDD…EEYD). The Ca(2+) site is built by Asp-267, Asp-275, Asp-323, Asp-325, and Asp-331. Basic residues predominate over residues 898-907 (RRLVRKRKKD). A disordered region spans residues 898-918 (RRLVRKRKKDPKVSTTSKAAL). C2 domains are found at residues 996–1124 (GANT…LLWY), 1159–1283 (RAPQ…TKHE), 1408–1527 (IPYP…SHCG), and 1645–1793 (GPPG…EKCS). Ca(2+)-binding residues include Asp-1028, Asp-1034, Asp-1090, and Asp-1092. Residues Asp-1442, Asp-1448, Asp-1497, Asp-1499, Asp-1764, Ser-1767, and Asp-1770 each coordinate Ca(2+). The segment covering 1845–1858 (DAEERPAGKGRDEP) has biased composition (basic and acidic residues). The tract at residues 1845 to 1867 (DAEERPAGKGRDEPNMNPKLDPP) is disordered. The helical transmembrane segment at 1894–1914 (WVFIGLIILLLVLLFLGVFFY) threads the bilayer.

It belongs to the ferlin family. Ca(2+) serves as cofactor.

The protein localises to the cell membrane. It is found in the nucleus membrane. It localises to the cytoplasmic vesicle membrane. In terms of biological role, may play a role in membrane regeneration and repair. This Xenopus tropicalis (Western clawed frog) protein is Myoferlin (myof).